An 874-amino-acid polypeptide reads, in one-letter code: Bifunctional uridylyltransferase/uridylyl-removing enzyme (874 aa).

A uridylyltransferase region spans residues 1-332 (MTLQSPLTFR…NGGASEDAEI (332 aa)). Positions 333-692 (IDEDFQRRGA…ISKKATRGGT (360 aa)) are uridylyl-removing. The HD domain maps to 451 to 573 (VDEHSIRLLK…VRDEEYLEYL (123 aa)). ACT domains follow at residues 693-777 (EVFV…RTPN) and 800-874 (LMEF…SVSA).

Belongs to the GlnD family. It depends on Mg(2+) as a cofactor.

It carries out the reaction [protein-PII]-L-tyrosine + UTP = [protein-PII]-uridylyl-L-tyrosine + diphosphate. It catalyses the reaction [protein-PII]-uridylyl-L-tyrosine + H2O = [protein-PII]-L-tyrosine + UMP + H(+). Uridylyltransferase (UTase) activity is inhibited by glutamine, while glutamine activates uridylyl-removing (UR) activity. Modifies, by uridylylation and deuridylylation, the PII regulatory proteins (GlnB and homologs), in response to the nitrogen status of the cell that GlnD senses through the glutamine level. Under low glutamine levels, catalyzes the conversion of the PII proteins and UTP to PII-UMP and PPi, while under higher glutamine levels, GlnD hydrolyzes PII-UMP to PII and UMP (deuridylylation). Thus, controls uridylylation state and activity of the PII proteins, and plays an important role in the regulation of nitrogen assimilation and metabolism. This chain is Bifunctional uridylyltransferase/uridylyl-removing enzyme, found in Vibrio campbellii (strain ATCC BAA-1116).